The primary structure comprises 491 residues: Monodehydroascorbate reductase 5, chlorplastic (491 aa).

Residues 1–42 constitute a chloroplast transit peptide; sequence MASTAAAASSQGCISWALRQRGLGGGGARAVPVLPRRRFCVS. Residues 61 to 64, E88, R95, K100, and 194 to 195 contribute to the FAD site; these read GGNA and RD. NAD(+)-binding positions include 217-223, E241, R247, and G306; that span reads GGYIGME. 219 to 223 is a binding site for NADP(+); it reads YIGME. Residues R247 and G306 each contribute to the NADP(+) site. D344 is a binding site for FAD. Residue 360–361 coordinates NAD(+); it reads EH. An NADP(+)-binding site is contributed by 360-361; sequence EH. Residue V362 coordinates FAD. R366 is an L-ascorbate binding site. FAD is bound at residue Y391. Residue Y391 participates in NAD(+) binding. Position 391 (Y391) interacts with NADP(+). R393 serves as a coordination point for L-ascorbate.

Belongs to the FAD-dependent oxidoreductase family. FAD serves as cofactor.

The protein resides in the plastid. Its subcellular location is the chloroplast. It carries out the reaction 2 monodehydro-L-ascorbate radical + NADH + H(+) = 2 L-ascorbate + NAD(+). Its function is as follows. Catalyzes the conversion of monodehydroascorbate to ascorbate, oxidizing NADH in the process. Ascorbate is a major antioxidant against reactive oxygen species (ROS) and nitric oxide (NO). In Oryza sativa subsp. japonica (Rice), this protein is Monodehydroascorbate reductase 5, chlorplastic.